The sequence spans 87 residues: Neurotoxin Cex1 (87 aa).

Residues 1–19 form the signal peptide; the sequence is MNSLLMITTCLVLFGTVWA. The LCN-type CS-alpha/beta domain occupies 20–85; sequence KEGYLVSKST…TYPIPGKSCG (66 aa). 4 cysteine pairs are disulfide-bonded: Cys31-Cys84, Cys35-Cys60, Cys44-Cys65, and Cys48-Cys67. Cys84 carries the cysteine amide modification. Positions 85-87 are excised as a propeptide; the sequence is GKK.

This sequence belongs to the long (4 C-C) scorpion toxin superfamily. Sodium channel inhibitor family. Beta subfamily. In terms of tissue distribution, expressed by the venom gland.

The protein resides in the secreted. In terms of biological role, beta toxins bind voltage-independently at site-4 of sodium channels (Nav) and shift the voltage of activation toward more negative potentials thereby affecting sodium channel activation and promoting spontaneous and repetitive firing. The sequence is that of Neurotoxin Cex1 from Centruroides exilicauda (Bark scorpion).